We begin with the raw amino-acid sequence, 372 residues long: sn-glycerol-3-phosphate import ATP-binding protein UgpC (372 aa).

The ABC transporter domain occupies 2–233 (LDIQQLVKTY…PASTFVASFI (232 aa)). ATP is bound at residue 35 to 42 (GPSGCGKS).

The protein belongs to the ABC transporter superfamily. sn-glycerol-3-phosphate importer (TC 3.A.1.1.3) family. In terms of assembly, the complex is composed of two ATP-binding proteins (UgpC), two transmembrane proteins (UgpA and UgpE) and a solute-binding protein (UgpB).

The protein localises to the cell inner membrane. The enzyme catalyses sn-glycerol 3-phosphate(out) + ATP + H2O = sn-glycerol 3-phosphate(in) + ADP + phosphate + H(+). Part of the ABC transporter complex UgpBAEC involved in sn-glycerol-3-phosphate (G3P) import. Responsible for energy coupling to the transport system. The chain is sn-glycerol-3-phosphate import ATP-binding protein UgpC from Vibrio vulnificus (strain CMCP6).